Here is a 455-residue protein sequence, read N- to C-terminus: Single-stranded DNA-binding protein homolog sam-10 (455 aa).

The region spanning 19-51 (ARDRLTSYIYEYLQQTGASKTAETFKEEVLSTN) is the LisH domain. Disordered stretches follow at residues 217–249 (PPPG…LNSP), 281–302 (SDHQ…TAGG), 314–343 (GPGS…HQPK), and 357–442 (EALT…NGEI). Low complexity-rich tracts occupy residues 288–298 (AGPAAAAPGAT) and 321–336 (VATT…SSIG). Over residues 396–406 (HSVNNNVNPGT) the composition is skewed to polar residues. Positions 407-421 (PGSNPLSNPMSNPPL) are enriched in low complexity.

Ubiquitously expressed with higher expression in the head and tail ganglia, the vulva and PLM neurons.

Its subcellular location is the cytoplasm. The protein resides in the nucleus. Involved cell autonomously in PLM neuron pre-synaptic differentiation by negatively regulating prk-2 expression and in neurite branch positioning. This is Single-stranded DNA-binding protein homolog sam-10 from Caenorhabditis elegans.